The primary structure comprises 135 residues: Sex-regulated protein janus-A (135 aa).

Lys-37 contributes to the substrate binding site. His-63 (proton acceptor) is an active-site residue. A substrate-binding site is contributed by 104-106; the sequence is SQG.

This sequence belongs to the janus family.

JanA and janB regulate somatic sex differentiation. The polypeptide is Sex-regulated protein janus-A (janA) (Drosophila yakuba (Fruit fly)).